A 161-amino-acid chain; its full sequence is Nucleotide-binding protein Bamb_2603 (161 aa).

This sequence belongs to the YajQ family.

In terms of biological role, nucleotide-binding protein. This is Nucleotide-binding protein Bamb_2603 from Burkholderia ambifaria (strain ATCC BAA-244 / DSM 16087 / CCUG 44356 / LMG 19182 / AMMD) (Burkholderia cepacia (strain AMMD)).